The sequence spans 252 residues: Flagellar brake protein YcgR (252 aa).

One can recognise a PilZ domain in the interval 123–238; it reads QRREFYRVPT…TLATVQKYIT (116 aa).

Belongs to the YcgR family. Monomer. Interacts with the flagellar basal bodies.

Its subcellular location is the bacterial flagellum basal body. Its function is as follows. Acts as a flagellar brake, regulating swimming and swarming in a bis-(3'-5') cyclic diguanylic acid (c-di-GMP)-dependent manner. Binds 1 c-di-GMP dimer per subunit. Increasing levels of c-di-GMP lead to decreased motility. The chain is Flagellar brake protein YcgR from Janthinobacterium sp. (strain Marseille) (Minibacterium massiliensis).